A 213-amino-acid polypeptide reads, in one-letter code: MSDLGAYIHAVETASSASALREAVIQLAQQNSTAAIPTLIAVLGYNNPAAAQAAVEGLIALGDAVVEPLLAQLDGYNYGARAYGVRVLGSIGHPAALQVLLAAAQSDFAPSVRRAATKALGTLRWQLIPEETVREAQLKEALAVLQRNSKAADWAVRYAVGVALDYLHQQAAARGIREAVRSLLNHLSDRDPDIVVRSRCQLALQRDSLSMHT.

It belongs to the CpcE/RpcE/PecE family. As to quaternary structure, cpcE and CpcF associate to form a lyase.

In terms of biological role, required for the chromophorylation of the CpcA gene product. This is Phycocyanobilin lyase subunit beta (cpcF) from Thermosynechococcus vestitus (strain NIES-2133 / IAM M-273 / BP-1).